Here is a 435-residue protein sequence, read N- to C-terminus: Glutamate-1-semialdehyde 2,1-aminomutase (435 aa).

An N6-(pyridoxal phosphate)lysine modification is found at K266.

This sequence belongs to the class-III pyridoxal-phosphate-dependent aminotransferase family. HemL subfamily. As to quaternary structure, homodimer. Pyridoxal 5'-phosphate serves as cofactor.

It is found in the cytoplasm. The enzyme catalyses (S)-4-amino-5-oxopentanoate = 5-aminolevulinate. It functions in the pathway porphyrin-containing compound metabolism; protoporphyrin-IX biosynthesis; 5-aminolevulinate from L-glutamyl-tRNA(Glu): step 2/2. The polypeptide is Glutamate-1-semialdehyde 2,1-aminomutase (Coxiella burnetii (strain Dugway 5J108-111)).